The primary structure comprises 514 residues: ATP synthase subunit alpha (514 aa).

Residue Gly170–Thr177 participates in ATP binding.

Belongs to the ATPase alpha/beta chains family. F-type ATPases have 2 components, CF(1) - the catalytic core - and CF(0) - the membrane proton channel. CF(1) has five subunits: alpha(3), beta(3), gamma(1), delta(1), epsilon(1). CF(0) has three main subunits: a(1), b(2) and c(9-12). The alpha and beta chains form an alternating ring which encloses part of the gamma chain. CF(1) is attached to CF(0) by a central stalk formed by the gamma and epsilon chains, while a peripheral stalk is formed by the delta and b chains.

It localises to the cell inner membrane. It carries out the reaction ATP + H2O + 4 H(+)(in) = ADP + phosphate + 5 H(+)(out). Functionally, produces ATP from ADP in the presence of a proton gradient across the membrane. The alpha chain is a regulatory subunit. This chain is ATP synthase subunit alpha, found in Alcanivorax borkumensis (strain ATCC 700651 / DSM 11573 / NCIMB 13689 / SK2).